Here is a 363-residue protein sequence, read N- to C-terminus: tRNA/tmRNA (uracil-C(5))-methyltransferase (363 aa).

Residues glutamine 187, tyrosine 215, asparagine 220, glutamate 236, and aspartate 296 each coordinate S-adenosyl-L-methionine. The active-site Nucleophile is cysteine 321. Glutamate 355 functions as the Proton acceptor in the catalytic mechanism.

The protein belongs to the class I-like SAM-binding methyltransferase superfamily. RNA M5U methyltransferase family. TrmA subfamily.

The catalysed reaction is uridine(54) in tRNA + S-adenosyl-L-methionine = 5-methyluridine(54) in tRNA + S-adenosyl-L-homocysteine + H(+). The enzyme catalyses uridine(341) in tmRNA + S-adenosyl-L-methionine = 5-methyluridine(341) in tmRNA + S-adenosyl-L-homocysteine + H(+). Functionally, dual-specificity methyltransferase that catalyzes the formation of 5-methyluridine at position 54 (m5U54) in all tRNAs, and that of position 341 (m5U341) in tmRNA (transfer-mRNA). This is tRNA/tmRNA (uracil-C(5))-methyltransferase from Pseudomonas aeruginosa (strain ATCC 15692 / DSM 22644 / CIP 104116 / JCM 14847 / LMG 12228 / 1C / PRS 101 / PAO1).